Reading from the N-terminus, the 255-residue chain is tRNA pseudouridine synthase A (255 aa).

Catalysis depends on aspartate 60, which acts as the Nucleophile. Position 118 (tyrosine 118) interacts with substrate.

This sequence belongs to the tRNA pseudouridine synthase TruA family. Homodimer.

The catalysed reaction is uridine(38/39/40) in tRNA = pseudouridine(38/39/40) in tRNA. In terms of biological role, formation of pseudouridine at positions 38, 39 and 40 in the anticodon stem and loop of transfer RNAs. This is tRNA pseudouridine synthase A from Leuconostoc mesenteroides subsp. mesenteroides (strain ATCC 8293 / DSM 20343 / BCRC 11652 / CCM 1803 / JCM 6124 / NCDO 523 / NBRC 100496 / NCIMB 8023 / NCTC 12954 / NRRL B-1118 / 37Y).